Consider the following 256-residue polypeptide: Phosphatidylglycerol--prolipoprotein diacylglyceryl transferase (256 aa).

The next 3 helical transmembrane spans lie at 19 to 39, 56 to 76, and 91 to 111; these read VHWY…LGYW, LIFY…MLFY, and IWEG…AAWL. Arginine 139 serves as a coordination point for a 1,2-diacyl-sn-glycero-3-phospho-(1'-sn-glycerol). A helical membrane pass occupies residues 231–251; it reads FGWLTMGQVLSIPMLLIGIWL.

Belongs to the Lgt family.

Its subcellular location is the cell inner membrane. It catalyses the reaction L-cysteinyl-[prolipoprotein] + a 1,2-diacyl-sn-glycero-3-phospho-(1'-sn-glycerol) = an S-1,2-diacyl-sn-glyceryl-L-cysteinyl-[prolipoprotein] + sn-glycerol 1-phosphate + H(+). It functions in the pathway protein modification; lipoprotein biosynthesis (diacylglyceryl transfer). Functionally, catalyzes the transfer of the diacylglyceryl group from phosphatidylglycerol to the sulfhydryl group of the N-terminal cysteine of a prolipoprotein, the first step in the formation of mature lipoproteins. The sequence is that of Phosphatidylglycerol--prolipoprotein diacylglyceryl transferase from Legionella pneumophila (strain Corby).